A 119-amino-acid polypeptide reads, in one-letter code: Beta-2-microglobulin (119 aa).

The first 20 residues, 1–20, serve as a signal peptide directing secretion; sequence MASSVVVALLVLLSLSGLEA. Positions 25 to 114 constitute an Ig-like C1-type domain; that stretch reads PKIQVYSRHP…VTFSTPKTVK (90 aa). A disulfide bridge links cysteine 45 with cysteine 100.

Belongs to the beta-2-microglobulin family. Heterodimer of an alpha chain and a beta chain. Beta-2-microglobulin is the beta-chain of major histocompatibility complex class I molecules.

The protein resides in the secreted. In terms of biological role, component of the class I major histocompatibility complex (MHC). Involved in the presentation of peptide antigens to the immune system. In Callithrix aurita (White-eared marmoset), this protein is Beta-2-microglobulin (B2M).